The primary structure comprises 114 residues: Small ribosomal subunit protein uS14m (114 aa).

This sequence belongs to the universal ribosomal protein uS14 family.

Its subcellular location is the mitochondrion. The chain is Small ribosomal subunit protein uS14m (MRP2) from Eremothecium gossypii (strain ATCC 10895 / CBS 109.51 / FGSC 9923 / NRRL Y-1056) (Yeast).